We begin with the raw amino-acid sequence, 89 residues long: Small ribosomal subunit protein bS20 (89 aa).

Positions 1 to 25 (MANTPQSKKRARQLERRTAVNKARR) are disordered.

This sequence belongs to the bacterial ribosomal protein bS20 family.

Binds directly to 16S ribosomal RNA. In Paracoccus denitrificans (strain Pd 1222), this protein is Small ribosomal subunit protein bS20.